The chain runs to 40 residues: Sapecin-C (40 aa).

3 disulfide bridges follow: C3/C30, C16/C36, and C20/C38.

The protein belongs to the invertebrate defensin family. Type 1 subfamily. As to expression, hemocytes and fat body.

Its subcellular location is the secreted. Sapecins, which are potent bactericidal proteins, are produced in response to injury. Sapecin C is cytotoxic to Gram-positive bacteria. The chain is Sapecin-C from Sarcophaga peregrina (Flesh fly).